The following is a 104-amino-acid chain: MYAIIETGGKQYMVREGDVLKVEKLNYPEGEVIALDKVLAVSFEDGNVEFGKPYLENVKVTAKVLEHGKGPKIRVFKYKPKKNYRRRQGHRQPYTKIQIEKIEK.

Belongs to the bacterial ribosomal protein bL21 family. As to quaternary structure, part of the 50S ribosomal subunit. Contacts protein L20.

In terms of biological role, this protein binds to 23S rRNA in the presence of protein L20. The polypeptide is Large ribosomal subunit protein bL21 (Caldanaerobacter subterraneus subsp. tengcongensis (strain DSM 15242 / JCM 11007 / NBRC 100824 / MB4) (Thermoanaerobacter tengcongensis)).